An 833-amino-acid chain; its full sequence is MTDTRRRVKVYTLNEDRQWDDRGTGHVSSGYVERLKGMSLLVRAESDGSLLLESKINPNTAYQKQQDTLIVWSEAENYDLALSFQEKAGCDEIWEKICQVQGKDPSVDITQDLVDESEEERFDDMSSPGLELPSCELSRLEEIAELVASSLPSPLRREKLALALENEGYIKKLLELFHVCEDLENIEGLHHLYEIIKGIFLLNRTALFEVMFSEECIMDVIGCLEYDPALSQPRKHREFLTKTAKFKEVIPISDPELKQKIHQTYRVQYIQDMVLPTPSVFEENMLSTLHSFIFFNKVEIVGMLQEDEKFLTDLFAQLTDEATDEEKRQELVNFLKEFCAFSQTLQPQNRDAFFKTLSNMGILPALEVILGMDDTQVRSAATDIFSYLVEYNPSMVREFVMQEAQQNDDVSKKLTEQKITSKDILLINLIIEHMICDTDPELGGAVQLMGLLRTLVDPENMLATANKTEKTEFLGFFYKHCMHVLTAPLLANTTEDKPSKDDFQTAQLLALVLELLTFCVEHHTYHIKNYIINKDILRRVLVLMASKHAFLALCALRFKRKIIGLKDEFYNRYIMKSFLFEPVVKAFLNNGSRYNLMNSAIIEMFEFIRVEDIKSLTAHVIENYWKALEDVDYVQTFKGLKLRFEQQRERQDNPKLDSMRSILRNHRYRRDARTLEDEEEMWFNTDEDDMEDGEAVVSPSDKTKNDDDIMDPISKFMERKKLKESEEKEVLLKTNLSGRQSPSFKLSLSSGTKTNLTSQSSTTNLPGSPGSPGSPGSPGSPGSVPKNTSQTAAITTKGGLVGLVDYPDDDEDDDEDEDKEDTLPLSKKAKFDS.

The region spanning 1–100 is the WH1 domain; the sequence is MTDTRRRVKV…DEIWEKICQV (100 aa). Residues serine 117 and serine 127 each carry the phosphoserine modification. At lysine 655 the chain carries N6-acetyllysine. Residues 683–694 show a composition bias toward acidic residues; sequence FNTDEDDMEDGE. Disordered stretches follow at residues 683–712 and 733–833; these read FNTD…IMDP and KTNL…KFDS. A phosphoserine mark is found at serine 698, serine 741, serine 768, serine 771, serine 774, serine 777, and serine 780. The segment covering 734 to 751 has biased composition (polar residues); sequence TNLSGRQSPSFKLSLSSG. The span at 752-768 shows a compositional bias: low complexity; sequence TKTNLTSQSSTTNLPGS. The span at 785-794 shows a compositional bias: polar residues; it reads PKNTSQTAAI. Positions 806-820 are enriched in acidic residues; that stretch reads YPDDDEDDDEDEDKE.

Belongs to the SMEK family. As to quaternary structure, serine/threonine-protein phosphatase 4 (PP4) occurs in different assemblies of the catalytic and one or more regulatory subunits. Component of the PP4 complex PPP4C-PPP4R2-PPP4R3A. Interacts with PPP4C; the interaction requires PPP4R2.

It is found in the cytoplasm. Its subcellular location is the cytoskeleton. It localises to the microtubule organizing center. The protein resides in the centrosome. The protein localises to the nucleus. Functionally, regulatory subunit of serine/threonine-protein phosphatase 4. May regulate the activity of PPP4C at centrosomal microtubule organizing centers. The PPP4C-PPP4R2-PPP4R3A PP4 complex specifically dephosphorylates H2AX phosphorylated on 'Ser-140' (gamma-H2AX) generated during DNA replication and required for DNA DSB repair. In Homo sapiens (Human), this protein is Serine/threonine-protein phosphatase 4 regulatory subunit 3A.